The primary structure comprises 159 residues: Cyclic pyranopterin monophosphate synthase (159 aa).

Residues 75 to 77 (LCH) and 113 to 114 (ME) contribute to the substrate site. Asp128 is a catalytic residue.

Belongs to the MoaC family. Homohexamer; trimer of dimers.

It catalyses the reaction (8S)-3',8-cyclo-7,8-dihydroguanosine 5'-triphosphate = cyclic pyranopterin phosphate + diphosphate. It participates in cofactor biosynthesis; molybdopterin biosynthesis. Catalyzes the conversion of (8S)-3',8-cyclo-7,8-dihydroguanosine 5'-triphosphate to cyclic pyranopterin monophosphate (cPMP). The sequence is that of Cyclic pyranopterin monophosphate synthase from Vibrio atlanticus (strain LGP32) (Vibrio splendidus (strain Mel32)).